The sequence spans 344 residues: MIEINQVNKVFYQGSKEIHALKDINLHIAEGTIFGVIGSSGAGKSTLIRCVNMLEAPTSGSIVVDGVDLTKLSKKQLSETRRNIGMIFQHFNLLSSRTVFDNVALPLELAGKDKEQIQSKVTELLKLVGLADKHESYPANLSGGQKQRVAIARALASDPKVLLCDEATSALDPATTQSILELLKEINRKLKITILLITHEMDVVKSICHEVAIIGGGELVEKGTVGEIFAHPKTELAHDFIRSTLDLSIPEDYQARLQPTRVAGSYPLVRLEFTGATVDAPLVSQISRKYNIDISILSSDLDYAGGVKFGMMVAELFGNEEDDNAAIEYLREHNVKVEVLGYVL.

An ABC transporter domain is found at 2–241; the sequence is IEINQVNKVF…PKTELAHDFI (240 aa). Residue 38 to 45 participates in ATP binding; it reads GSSGAGKS.

The protein belongs to the ABC transporter superfamily. Methionine importer (TC 3.A.1.24) family. In terms of assembly, the complex is composed of two ATP-binding proteins (MetN), two transmembrane proteins (MetI) and a solute-binding protein (MetQ).

Its subcellular location is the cell inner membrane. It catalyses the reaction L-methionine(out) + ATP + H2O = L-methionine(in) + ADP + phosphate + H(+). It carries out the reaction D-methionine(out) + ATP + H2O = D-methionine(in) + ADP + phosphate + H(+). Part of the ABC transporter complex MetNIQ involved in methionine import. Responsible for energy coupling to the transport system. The sequence is that of Methionine import ATP-binding protein MetN from Vibrio vulnificus (strain YJ016).